The sequence spans 171 residues: Large ribosomal subunit protein uL10 (171 aa).

Belongs to the universal ribosomal protein uL10 family. Part of the ribosomal stalk of the 50S ribosomal subunit. The N-terminus interacts with L11 and the large rRNA to form the base of the stalk. The C-terminus forms an elongated spine to which L12 dimers bind in a sequential fashion forming a multimeric L10(L12)X complex.

Functionally, forms part of the ribosomal stalk, playing a central role in the interaction of the ribosome with GTP-bound translation factors. In Corynebacterium diphtheriae (strain ATCC 700971 / NCTC 13129 / Biotype gravis), this protein is Large ribosomal subunit protein uL10.